The following is a 372-amino-acid chain: NAD(P)H-quinone oxidoreductase subunit 1 (372 aa).

Helical transmembrane passes span 27-47 (IIWL…GVLV), 97-117 (ILFT…WLIV), 128-148 (VGIG…GLLM), 176-196 (LALS…IDIV), 204-224 (ILSW…ICAL), 266-286 (ILSA…PIPV), 308-328 (SIGI…AILL), and 347-367 (FLLP…LAFP).

The protein belongs to the complex I subunit 1 family. As to quaternary structure, NDH-1 is composed of at least 11 different subunits.

Its subcellular location is the cellular thylakoid membrane. It catalyses the reaction a plastoquinone + NADH + (n+1) H(+)(in) = a plastoquinol + NAD(+) + n H(+)(out). It carries out the reaction a plastoquinone + NADPH + (n+1) H(+)(in) = a plastoquinol + NADP(+) + n H(+)(out). NDH-1 shuttles electrons from an unknown electron donor, via FMN and iron-sulfur (Fe-S) centers, to quinones in the respiratory and/or the photosynthetic chain. The immediate electron acceptor for the enzyme in this species is believed to be plastoquinone. Couples the redox reaction to proton translocation, and thus conserves the redox energy in a proton gradient. In Prochlorococcus marinus (strain MIT 9215), this protein is NAD(P)H-quinone oxidoreductase subunit 1.